The sequence spans 464 residues: Serine/threonine-protein kinase 38-like (464 aa).

Ala-2 carries the post-translational modification N-acetylalanine. Positions 64 to 89 are S100B binding; that stretch reads KLRRSQHARKETEFLRLKRTRLGLDD. At Thr-75 the chain carries Phosphothreonine. In terms of domain architecture, Protein kinase spans 90–383; sequence FESLKVIGRG…VEEIKGHPFF (294 aa). ATP is bound by residues 96–104 and Lys-119; that span reads IGRGAFGEV. Asp-213 functions as the Proton acceptor in the catalytic mechanism. Position 282 is a phosphoserine; by autocatalysis (Ser-282). Residues 384–453 form the AGC-kinase C-terminal domain; that stretch reads EGVDWGHIRE…KRFEGLTQRG (70 aa). Residue Thr-442 is modified to Phosphothreonine; by STK24/MST3.

It belongs to the protein kinase superfamily. AGC Ser/Thr protein kinase family. In terms of assembly, homodimeric S100B binds two molecules of STK38L. Interacts with MOB1 and MOB2. Interacts with MICAL1; leading to inhibit the protein kinase activity by antagonizing activation by MST1/STK4. Mg(2+) serves as cofactor. In terms of tissue distribution, highly expressed in the large and small intestine, stomach and testis. High levels also present in the brain, in particular the neurocortex, basal forebrain, hippocampus, the amygdala, cerebellum and brainstem.

Its subcellular location is the cytoplasm. It localises to the cytoskeleton. The protein localises to the membrane. The catalysed reaction is L-seryl-[protein] + ATP = O-phospho-L-seryl-[protein] + ADP + H(+). The enzyme catalyses L-threonyl-[protein] + ATP = O-phospho-L-threonyl-[protein] + ADP + H(+). With respect to regulation, activated by binding of S100B which releases autoinhibitory N-lobe interactions, enabling ATP to bind and the autophosphorylation of Ser-282. Thr-442 then undergoes calcium-dependent phosphorylation by STK24/MST3. Interactions between phosphorylated Thr-442 and the N-lobe promote additional structural changes that complete the activation of the kinase. Autoinhibition is also released by the binding of MOB1/MOBKL1A and MOB2 to the N-terminal of STK38L. Its function is as follows. Involved in the regulation of structural processes in differentiating and mature neuronal cells. The polypeptide is Serine/threonine-protein kinase 38-like (Mus musculus (Mouse)).